The primary structure comprises 1985 residues: Treslin (1985 aa).

Disordered regions lie at residues 574 to 609 (AQKA…LKPT), 791 to 858 (EEKS…QPNK), 894 to 974 (IQET…SIVE), 999 to 1033 (RRNS…RPGS), 1072 to 1156 (VYKT…LWGR), 1184 to 1243 (VKTP…PSGY), 1849 to 1875 (HEDS…QSRS), and 1938 to 1966 (FSDG…SPFR). Basic residues predominate over residues 823–837 (RSAKKRRSTALARHR). Over residues 964–974 (SESNSNISIVE) the composition is skewed to low complexity. Polar residues-rich tracts occupy residues 999–1026 (RRNS…QLQQ) and 1085–1097 (SKNI…QSGN). The span at 1105–1114 (TPYTPRTPSR) shows a compositional bias: low complexity. Basic and acidic residues-rich tracts occupy residues 1144 to 1156 (KPEE…LWGR) and 1191 to 1200 (QRLESKDFRT). Polar residues predominate over residues 1201 to 1224 (PSRTPTRSNNTTPAKQSMQISNTP). Residues 1225–1238 (RKSDLKHPQEHESR) show a composition bias toward basic and acidic residues.

Belongs to the treslin family. In terms of assembly, interacts with topbp1 (via BRCT domains); interaction is cdk2-dependent. Component of the replisome complex. Post-translationally, phosphorylated during interphase. Cdk2 promotes both phosphorylation and formation of a ticrr-topbp1 complex.

The protein localises to the nucleus. Its function is as follows. Regulator of DNA replication and S/M and G2/M checkpoints. Regulates the triggering of DNA replication initiation via its interaction with topbp1 by participating in cdk2-mediated loading of cdc45l onto replication origins. Required for the transition from pre-replication complex (pre-RC) to pre-initiation complex (pre-IC). Required to prevent mitotic entry after treatment with ionizing radiation. In Xenopus laevis (African clawed frog), this protein is Treslin (ticrr).